The sequence spans 687 residues: MKNTSAFAWTKDDEQIAWLTIDVPNEKMNTLQAAFAEQVTQVLDEIEEQQAHIKGLVIQSGKPDNFIAGADINMIANCQNASEAQALAEKGQHLFQRIEDLPFATVAAIHGPCLGGGLELALACDYRVCSDDNKTKLGLPEVQLGLLPGSGGTQRLPRLIGLLPSLDIILTGKQLRPKTALKLGVVDASVPHTILSRIAADFALKKKAKRKLTAKEWGLSRNPLGRNVIFSQAEKQAQKKARGNYPAIAAILDCIEHGLDKGMKKGLQREAEQFARLAMTPESAALRSLFFAMTEMKKEKGSDAEPKSIDYVGVLGGGLMGGGIAHVSIAKAKKKVTIKDINNDGLLNAYQYHYQRLDTLRKRRIISKAQLQQQMLQLTGVTEFDGFKKLDVVVEAVFEDLNLKQEMVKAVQEQGKEDVIFATNTSSLPIGQIAEGAQKPENIVGLHYFSPVEKMPLVEVIPHATTSDETISTVVALAKQQGKTPIVVKDSAGFYVNRILAPYMNEAARLLLAGEPIEVLDEALLDFGFPVGPISLLDEVGVDIGAKIMPILEAELGDRFRSPDVFQTLIDDKRLGKKTKRGFYVYKGKKKEPDQEVYTLLNIKPQSQLSKNEIAMRCVLPMLAEAKRCLDEGIIASERDGDIGAIFGIGFPPFLGGPFTYMNTLGEEKLATLMRNYADKYGDRFIE.

Positions 1–191 (MKNTSAFAWT…KLGVVDASVP (191 aa)) are enoyl-CoA hydratase. The segment at 307–687 (KSIDYVGVLG…ADKYGDRFIE (381 aa)) is 3-hydroxyacyl-CoA dehydrogenase.

This sequence in the N-terminal section; belongs to the enoyl-CoA hydratase/isomerase family. The protein in the central section; belongs to the 3-hydroxyacyl-CoA dehydrogenase family. As to quaternary structure, heterotetramer of two alpha chains (FadJ) and two beta chains (FadI).

It is found in the cytoplasm. The enzyme catalyses a (3S)-3-hydroxyacyl-CoA = a (2E)-enoyl-CoA + H2O. The catalysed reaction is a 4-saturated-(3S)-3-hydroxyacyl-CoA = a (3E)-enoyl-CoA + H2O. It carries out the reaction a (3S)-3-hydroxyacyl-CoA + NAD(+) = a 3-oxoacyl-CoA + NADH + H(+). It catalyses the reaction (3S)-3-hydroxybutanoyl-CoA = (3R)-3-hydroxybutanoyl-CoA. The protein operates within lipid metabolism; fatty acid beta-oxidation. In terms of biological role, catalyzes the formation of a hydroxyacyl-CoA by addition of water on enoyl-CoA. Also exhibits 3-hydroxyacyl-CoA epimerase and 3-hydroxyacyl-CoA dehydrogenase activities. The protein is Fatty acid oxidation complex subunit alpha of Aliivibrio fischeri (strain ATCC 700601 / ES114) (Vibrio fischeri).